Here is a 1066-residue protein sequence, read N- to C-terminus: Kinesin-like protein Klp61F (1066 aa).

The region spanning 19 to 356 is the Kinesin motor domain; the sequence is NIQVYVRVRP…LEYAHRAKNI (338 aa). Residue 103–110 participates in ATP binding; sequence GQTGTGKT. Residues 362–462 adopt a coiled-coil conformation; that stretch reads VNQKLTKKTV…KTEENLLNTK (101 aa). A Phosphothreonine modification is found at T520. Coiled coils occupy residues 540–569, 639–738, 808–875, and 889–918; these read DRMQDNLEMIGGSLNLYQDQQAALKEQLSQ, LMSK…QIKN, CSML…LITE, and DLVQESNRQFSEHAEHQRQQLQICEQELVR. T933 carries the post-translational modification Phosphothreonine. Position 949 is a phosphoserine (S949). The segment covering 990-1002 has biased composition (polar residues); it reads ELSETETIMNSTP. Disordered regions lie at residues 990–1009 and 1016–1066; these read ELSETETIMNSTPIEPVDGV and GTTR…ENVA. The segment covering 1033–1051 has biased composition (low complexity); it reads GGKRSSSLSRSLTPSKTSP. S1043 bears the Phosphoserine mark. Residue T1045 is modified to Phosphothreonine. S1050 and S1054 each carry phosphoserine.

Belongs to the TRAFAC class myosin-kinesin ATPase superfamily. Kinesin family. BimC subfamily. In terms of assembly, homotetramer. Consists of two pairs of polypeptides associated by coiled-coil interactions to form two homodimers. The homodimers are linked by lateral interactions between their coiled-coil regions to form a bipolar homotetramer consisting of a central rod with two motor domains projecting from either end. Parallel coiled coils extend from each pair of motor heads, switch to two antiparallel coiled coils in the central region and then back to parallel coiled coils. Interacts with Wee1. In terms of processing, phosphorylation is required for localization to mitotic spindles. Phosphorylation of Thr-933 during mitosis controls association with the spindle apparatus. Phosphorylated in vitro by Wee1.

Its subcellular location is the cytoplasm. It is found in the cytoskeleton. The protein localises to the spindle. It localises to the spindle pole. Functionally, important role in mitotic dividing cells. Microtubule motor required for spindle body separation. Slow plus-end directed microtubule motor capable of cross-linking and sliding apart antiparallel microtubules, thereby pushing apart the associated spindle poles during spindle assembly and function. Forms cross-links between microtubules within interpolar microtubule bundles. Contributes to the length of the metaphase spindle, maintains the prometaphase spindle by antagonizing Ncd, drives anaphase B, and also contributes to normal chromosome congression, kinetochore spacing, and anaphase A rates. Displays microtubule-stimulated ATPase activity. Required for normal fusome organization. Required in non-mitotic cells for transport of secretory proteins from the Golgi complex to the cell surface. This chain is Kinesin-like protein Klp61F, found in Drosophila melanogaster (Fruit fly).